A 139-amino-acid polypeptide reads, in one-letter code: Cuticle protein 6 (139 aa).

Pyrrolidone carboxylic acid is present on Q1. In terms of domain architecture, Chitin-binding type R&amp;R spans 31–92; it reads LGQFAFHHAG…VGANNLPEAP (62 aa).

The chain is Cuticle protein 6 from Blaberus craniifer (Death's head cockroach).